The sequence spans 376 residues: Cytoplasmic tRNA 2-thiolation protein 2 (376 aa).

This sequence belongs to the CTU2/NCS2 family.

The protein localises to the cytoplasm. It participates in tRNA modification; 5-methoxycarbonylmethyl-2-thiouridine-tRNA biosynthesis. Functionally, plays a central role in 2-thiolation of mcm(5)S(2)U at tRNA wobble positions of tRNA(Lys), tRNA(Glu) and tRNA(Gln). May act by forming a heterodimer with NCS6 that ligates sulfur from thiocarboxylated URM1 onto the uridine of tRNAs at wobble position. Prior mcm(5) tRNA modification by the elongator complex is required for 2-thiolation. May also be involved in protein urmylation. The polypeptide is Cytoplasmic tRNA 2-thiolation protein 2 (Coccidioides immitis (strain RS) (Valley fever fungus)).